Reading from the N-terminus, the 120-residue chain is uncharacterized protein (120 aa).

To the N-terminal region of phage HK97/HK620 Gp37/hpaH.

This is an uncharacterized protein from Escherichia coli (strain K12).